We begin with the raw amino-acid sequence, 430 residues long: Trigger factor (430 aa).

Positions 157-242 constitute a PPIase FKBP-type domain; it reads GDLVALETWS…AVEVSEPVLP (86 aa).

It belongs to the FKBP-type PPIase family. Tig subfamily.

The protein resides in the cytoplasm. It carries out the reaction [protein]-peptidylproline (omega=180) = [protein]-peptidylproline (omega=0). In terms of biological role, involved in protein export. Acts as a chaperone by maintaining the newly synthesized protein in an open conformation. Functions as a peptidyl-prolyl cis-trans isomerase. This chain is Trigger factor, found in Xanthomonas oryzae pv. oryzae (strain PXO99A).